The sequence spans 137 residues: Large-conductance mechanosensitive channel (137 aa).

2 helical membrane passes run 16–36 (VIDLAVGVIIGGAFGKIVDSI) and 83–103 (GNFITVALNFAILAFIIFLMI).

Belongs to the MscL family. In terms of assembly, homopentamer.

The protein resides in the cell inner membrane. Channel that opens in response to stretch forces in the membrane lipid bilayer. May participate in the regulation of osmotic pressure changes within the cell. In Methylibium petroleiphilum (strain ATCC BAA-1232 / LMG 22953 / PM1), this protein is Large-conductance mechanosensitive channel.